Here is a 638-residue protein sequence, read N- to C-terminus: MAALAGDEAWRCRGCGTYVPLSQRLYRTANEAWHGSCFRCSECQESLTNWYYEKDGKLYCHKDYWAKFGEFCHGCSLLMTGPAMVAGEFKYHPECFACMSCKVIIEDGDAYALVQHATLYCGKCHNEVVLAPMFERLSTESVQDQLPYSVTLISMPATTECRRGFSVTVESASSNYATTVQVKEVNRMHISPNNRNAIHPGDRILEINGTPVRTLRVEEVEDAIKQTSQTLQLLIEHDPVPQRLDQLRLDARLPPHMQSTGHTLMLSTLDTKENQEGTLRRRSLRRSNSISKSPGPSSPKEPLLLSRDISRSESLRCSSSYSQQIFRPCDLIHGEVLGKGFFGQAIKVTHKATGKVMVMKELIRCDEETQKTFLTEVKVMRSLDHPNVLKFIGVLYKDKKLNLLTEYIEGGTLKDFLRSVDPFPWQQKVRFAKGISSGMAYLHSMCIIHRDLNSHNCLIKLDKTVVVADFGLSRLIVEERKRPPVEKATTKKRTLRKSDRKKRYTVVGNPYWMAPEMLNGKSYDETVDVFSFGIVLCEIIGQVYADPDCLPRTLDFGLNVKLFWEKFVPTDCPPAFFPLAAICCKLEPESRPAFSKLEDSFEALSLFLGELAIPLPAELEDLDHTVSMEYGLTRDSPP.

LIM zinc-binding domains are found at residues 12 to 63 (CRGC…CHKD) and 72 to 124 (CHGC…CGKC). The region spanning 152–239 (LISMPATTEC…TLQLLIEHDP (88 aa)) is the PDZ domain. Thr210 carries the phosphothreonine modification. Residues 255 to 304 (PHMQSTGHTLMLSTLDTKENQEGTLRRRSLRRSNSISKSPGPSSPKEPLL) are disordered. Over residues 257-269 (MQSTGHTLMLSTL) the composition is skewed to polar residues. Over residues 270 to 279 (DTKENQEGTL) the composition is skewed to basic and acidic residues. The span at 286–304 (RSNSISKSPGPSSPKEPLL) shows a compositional bias: low complexity. 2 positions are modified to phosphoserine: Ser293 and Ser298. Residues 331–608 (LIHGEVLGKG…DSFEALSLFL (278 aa)) enclose the Protein kinase domain. ATP is bound by residues 337 to 345 (LGKGFFGQA) and Lys360. Asp451 is a catalytic residue. Phosphothreonine; by ROCK1 and CDC42BP is present on Thr505.

It belongs to the protein kinase superfamily. TKL Ser/Thr protein kinase family. In terms of assembly, binds ROCK1 and MARF1. Interacts with NISCH. Phosphorylated on serine and/or threonine residues by ROCK1. Specifically expressed in the testes.

It is found in the cytoplasm. It localises to the cytoskeleton. Its subcellular location is the spindle. The protein resides in the microtubule organizing center. The protein localises to the centrosome. It is found in the nucleus. It localises to the perinuclear region. It catalyses the reaction L-seryl-[protein] + ATP = O-phospho-L-seryl-[protein] + ADP + H(+). The enzyme catalyses L-threonyl-[protein] + ATP = O-phospho-L-threonyl-[protein] + ADP + H(+). Functionally, serine/threonine-protein kinase that plays an essential role in the regulation of actin filament dynamics. Acts downstream of several Rho family GTPase signal transduction pathways. Involved in astral microtubule organization and mitotic spindle orientation during early stages of mitosis by mediating phosphorylation of TPPP. Displays serine/threonine-specific phosphorylation of myelin basic protein and histone (MBP) in vitro. Suppresses ciliogenesis via multiple pathways; phosphorylation of CFL1, suppression of directional trafficking of ciliary vesicles to the ciliary base, and by facilitating YAP1 nuclear localization where it acts as a transcriptional corepressor of the TEAD4 target genes AURKA and PLK1. The sequence is that of LIM domain kinase 2 (Limk2) from Mus musculus (Mouse).